A 545-amino-acid chain; its full sequence is Glucose-6-phosphate isomerase (545 aa).

Residue Glu-351 is the Proton donor of the active site. Residues His-382 and Lys-510 contribute to the active site.

This sequence belongs to the GPI family.

It is found in the cytoplasm. The enzyme catalyses alpha-D-glucose 6-phosphate = beta-D-fructose 6-phosphate. It participates in carbohydrate biosynthesis; gluconeogenesis. The protein operates within carbohydrate degradation; glycolysis; D-glyceraldehyde 3-phosphate and glycerone phosphate from D-glucose: step 2/4. In terms of biological role, catalyzes the reversible isomerization of glucose-6-phosphate to fructose-6-phosphate. The chain is Glucose-6-phosphate isomerase from Shewanella woodyi (strain ATCC 51908 / MS32).